The chain runs to 236 residues: 2-C-methyl-D-erythritol 4-phosphate cytidylyltransferase (236 aa).

This sequence belongs to the IspD/TarI cytidylyltransferase family. IspD subfamily. Homodimer.

It catalyses the reaction 2-C-methyl-D-erythritol 4-phosphate + CTP + H(+) = 4-CDP-2-C-methyl-D-erythritol + diphosphate. It functions in the pathway isoprenoid biosynthesis; isopentenyl diphosphate biosynthesis via DXP pathway; isopentenyl diphosphate from 1-deoxy-D-xylulose 5-phosphate: step 2/6. Catalyzes the formation of 4-diphosphocytidyl-2-C-methyl-D-erythritol from CTP and 2-C-methyl-D-erythritol 4-phosphate (MEP). The protein is 2-C-methyl-D-erythritol 4-phosphate cytidylyltransferase of Escherichia coli O139:H28 (strain E24377A / ETEC).